Here is a 268-residue protein sequence, read N- to C-terminus: MIIRPVVRSLQGRAPLATLRSAQSVFQPLPQLRRNASVTTGPDAASKASTTPIARITTTTEAPKDQKKAKAAAAAAAEPEEQEVIMSRMPRSLEALYLQPLRREAEYGVPSCDLQLRSYSIRNLEFFCDFALRAAYYLGLPAFGPVPLPRMIERWTVPKSHFIFKKSQENFERVTLRRLIQIKDGHPETVQLWLAFLQKHAYYGIGMKANVWEFSKLGVSKAMDESKSEVEKLLETRWEHLSHVSDMKGVGNFEDFLAKERLRISGGR.

The N-terminal 64 residues, 1–64 (MIIRPVVRSL…RITTTTEAPK (64 aa)), are a transit peptide targeting the mitochondrion.

It belongs to the universal ribosomal protein uS10 family. As to quaternary structure, component of the mitochondrial small ribosomal subunit (mt-SSU). Mature N.crassa 74S mitochondrial ribosomes consist of a small (37S) and a large (54S) subunit. The 37S small subunit contains a 16S ribosomal RNA (16S mt-rRNA) and 32 different proteins. The 54S large subunit contains a 23S rRNA (23S mt-rRNA) and 42 different proteins.

The protein resides in the mitochondrion. Its function is as follows. Component of the mitochondrial ribosome (mitoribosome), a dedicated translation machinery responsible for the synthesis of mitochondrial genome-encoded proteins, including at least some of the essential transmembrane subunits of the mitochondrial respiratory chain. The mitoribosomes are attached to the mitochondrial inner membrane and translation products are cotranslationally integrated into the membrane. The polypeptide is Small ribosomal subunit protein uS10m (mrp-10) (Neurospora crassa (strain ATCC 24698 / 74-OR23-1A / CBS 708.71 / DSM 1257 / FGSC 987)).